Reading from the N-terminus, the 182-residue chain is ATP synthase subunit delta (182 aa).

Belongs to the ATPase delta chain family. F-type ATPases have 2 components, F(1) - the catalytic core - and F(0) - the membrane proton channel. F(1) has five subunits: alpha(3), beta(3), gamma(1), delta(1), epsilon(1). F(0) has three main subunits: a(1), b(2) and c(10-14). The alpha and beta chains form an alternating ring which encloses part of the gamma chain. F(1) is attached to F(0) by a central stalk formed by the gamma and epsilon chains, while a peripheral stalk is formed by the delta and b chains.

It localises to the cell inner membrane. Its function is as follows. F(1)F(0) ATP synthase produces ATP from ADP in the presence of a proton or sodium gradient. F-type ATPases consist of two structural domains, F(1) containing the extramembraneous catalytic core and F(0) containing the membrane proton channel, linked together by a central stalk and a peripheral stalk. During catalysis, ATP synthesis in the catalytic domain of F(1) is coupled via a rotary mechanism of the central stalk subunits to proton translocation. Functionally, this protein is part of the stalk that links CF(0) to CF(1). It either transmits conformational changes from CF(0) to CF(1) or is implicated in proton conduction. This is ATP synthase subunit delta from Persephonella marina (strain DSM 14350 / EX-H1).